Reading from the N-terminus, the 87-residue chain is Toxin Cll5c (87 aa).

An N-terminal signal peptide occupies residues 1-19 (MNSLLMITACLVLFGTVWA). Residues 20-85 (KEGYLVNKST…TYPLPNKSCS (66 aa)) enclose the LCN-type CS-alpha/beta domain. 4 disulfide bridges follow: C31–C84, C35–C60, C44–C65, and C48–C67. Residues 86–87 (KK) constitute a propeptide, removed by a carboxypeptidase.

The protein belongs to the long (4 C-C) scorpion toxin superfamily. Sodium channel inhibitor family. Beta subfamily. Expressed by the venom gland.

It localises to the secreted. Functionally, beta toxins bind voltage-independently at site-4 of sodium channels (Nav) and shift the voltage of activation toward more negative potentials thereby affecting sodium channel activation and promoting spontaneous and repetitive firing. The sequence is that of Toxin Cll5c from Centruroides limpidus (Mexican scorpion).